A 205-amino-acid polypeptide reads, in one-letter code: Small ribosomal subunit protein uS4 (205 aa).

The segment at 20–47 is disordered; that stretch reads WGRSKSPLNRGKENPPGQHGQRRKKPSD. The region spanning 94 to 154 is the S4 RNA-binding domain; that stretch reads CRLDAVVYRL…TKSKDMALIL (61 aa).

It belongs to the universal ribosomal protein uS4 family. As to quaternary structure, part of the 30S ribosomal subunit. Contacts protein S5. The interaction surface between S4 and S5 is involved in control of translational fidelity.

Functionally, one of the primary rRNA binding proteins, it binds directly to 16S rRNA where it nucleates assembly of the body of the 30S subunit. Its function is as follows. With S5 and S12 plays an important role in translational accuracy. This chain is Small ribosomal subunit protein uS4, found in Paramagnetospirillum magneticum (strain ATCC 700264 / AMB-1) (Magnetospirillum magneticum).